A 257-amino-acid polypeptide reads, in one-letter code: MDVVIRQTPKEVAQLAATIMARYVSEGKNIGLATGSTPLLTYQELIAKHREGLSFANTTAFLLDEYVGLPEDHEQSYHYTIYNEFTQYVDFADGAVHTPDGMNPRTDEAGREYEEAIEAAGGIDIQLLGVGTNGHVGFNEPGSSFDSLTRLKTLHPQTRRDNARFFGSLEQVPIHVITQGLGTIRRAGHLLLLATGENKADAVAKLVEGPVSAMMPASVLQLHRHATVIVDEAAASQLQETEFYRFVDANRPEWQAY.

Asp64 acts as the Proton acceptor; for enolization step in catalysis. The active-site For ring-opening step is the Asn133. His135 acts as the Proton acceptor; for ring-opening step in catalysis. The active-site For ring-opening step is Glu140.

The protein belongs to the glucosamine/galactosamine-6-phosphate isomerase family. NagB subfamily.

It carries out the reaction alpha-D-glucosamine 6-phosphate + H2O = beta-D-fructose 6-phosphate + NH4(+). The protein operates within amino-sugar metabolism; N-acetylneuraminate degradation; D-fructose 6-phosphate from N-acetylneuraminate: step 5/5. Functionally, catalyzes the reversible isomerization-deamination of glucosamine 6-phosphate (GlcN6P) to form fructose 6-phosphate (Fru6P) and ammonium ion. The sequence is that of Glucosamine-6-phosphate deaminase from Corynebacterium urealyticum (strain ATCC 43042 / DSM 7109).